The sequence spans 517 residues: ATP synthase subunit alpha (517 aa).

ATP is bound at residue 173–180; it reads GDRQTGKT.

This sequence belongs to the ATPase alpha/beta chains family. In terms of assembly, F-type ATPases have 2 components, CF(1) - the catalytic core - and CF(0) - the membrane proton channel. CF(1) has five subunits: alpha(3), beta(3), gamma(1), delta(1), epsilon(1). CF(0) has three main subunits: a(1), b(2) and c(9-12). The alpha and beta chains form an alternating ring which encloses part of the gamma chain. CF(1) is attached to CF(0) by a central stalk formed by the gamma and epsilon chains, while a peripheral stalk is formed by the delta and b chains.

The protein localises to the cell inner membrane. It carries out the reaction ATP + H2O + 4 H(+)(in) = ADP + phosphate + 5 H(+)(out). Functionally, produces ATP from ADP in the presence of a proton gradient across the membrane. The alpha chain is a regulatory subunit. This Legionella pneumophila (strain Lens) protein is ATP synthase subunit alpha.